The sequence spans 120 residues: MDYEFLRDVTGVVKVRMSMGHEVIGHWFNEEVKENLALLDEVEDAARTLKGSERSWQRAGHEYTLWMDGEEVMVRANQLEFAGDEMEEGMNYYDEESLSLCGVEDFLQVVAAYRNFVQQK.

This sequence belongs to the UPF0231 family.

The chain is UPF0231 protein YacL from Escherichia coli (strain SMS-3-5 / SECEC).